A 241-amino-acid polypeptide reads, in one-letter code: Probable transcriptional regulatory protein RALTA_A0859 (241 aa).

Belongs to the TACO1 family.

The protein resides in the cytoplasm. The polypeptide is Probable transcriptional regulatory protein RALTA_A0859 (Cupriavidus taiwanensis (strain DSM 17343 / BCRC 17206 / CCUG 44338 / CIP 107171 / LMG 19424 / R1) (Ralstonia taiwanensis (strain LMG 19424))).